We begin with the raw amino-acid sequence, 66 residues long: Putative transmembrane protein ORF66 (66 aa).

The Cytoplasmic portion of the chain corresponds to 1–6 (MSDVDD). The helical transmembrane segment at 7 to 27 (TIVDSIAIVGAILIGIFLIVV) threads the bilayer. At 28-39 (SVSNTSLFNNTE) the chain is on the extracellular side. Residues 40-60 (YDSMINSVLVIISSVIAYTLG) form a helical membrane-spanning segment. The Cytoplasmic segment spans residues 61–66 (KRRSKS).

The protein localises to the host membrane. The chain is Putative transmembrane protein ORF66 from Acidianus filamentous virus 2 (isolate Italy/Pozzuoli) (AFV-2).